The following is a 508-amino-acid chain: Protein NODULATION SIGNALING PATHWAY 2 (508 aa).

A disordered region spans residues 75 to 98 (ITTTTTTTTTTDEEEEEMETTTTT). Positions 108-500 (VGDDSKGLKL…RRLLSASLWT (393 aa)) constitute a GRAS domain. Residues 115–190 (LKLVHLLMAG…NNHHHHNNNK (76 aa)) are leucine repeat I (LRI). The tract at residues 209–273 (FQLLQDMSPY…NNGPHLRITA (65 aa)) is VHIID. The VHIID signature appears at 240-244 (VHVID). Residues 289 to 321 (ETGRRLTSFAASLGQPFSFHHCRLDSDETFRPS) are leucine repeat II (LRII). The tract at residues 331 to 422 (LVFNCMLNLP…RVFFGPRIAG (92 aa)) is PFYRE. The segment at 425–500 (GRIYRTGGEE…RRLLSASLWT (76 aa)) is SAW.

Belongs to the GRAS family. As to quaternary structure, interacts with RAM1. Interacts with IPN2 and RAD1. In terms of tissue distribution, expressed in roots, shoots and leaves.

It localises to the nucleus membrane. It is found in the endoplasmic reticulum. Transcriptional regulator essential for Nod-factor-induced gene expression. Acts downstream of calcium spiking and DMI3, a calcium/calmodulin-dependent protein kinase (CCaMK). Transcription factor involved in the control of strigolactone biosynthesis in roots through the activation of the beta-carotene isomerase D27, which participates in a pathway leading to biosynthesis of strigolactones. The polypeptide is Protein NODULATION SIGNALING PATHWAY 2 (Medicago truncatula (Barrel medic)).